Reading from the N-terminus, the 123-residue chain is MIQEQTMLTVADNSGARRVMCIKVLGGSHRRYAGVGDIIKITIKEAIPRGKVKKGDVLKAVVVRTKKGVRRPDGSVVRFDGNACVLLNNNSEQPIGTRIFGPVTRELRTEKFMKIISLAPEVL.

It belongs to the universal ribosomal protein uL14 family. As to quaternary structure, part of the 50S ribosomal subunit. Forms a cluster with proteins L3 and L19. In the 70S ribosome, L14 and L19 interact and together make contacts with the 16S rRNA in bridges B5 and B8.

Binds to 23S rRNA. Forms part of two intersubunit bridges in the 70S ribosome. The polypeptide is Large ribosomal subunit protein uL14 (Sodalis glossinidius (strain morsitans)).